The following is a 188-amino-acid chain: UPF0488 protein C8orf33 homolog (188 aa).

Disordered regions lie at residues 1-65 (MAAP…AEAQ), 87-112 (QRPT…TPLP), and 144-182 (AHSA…RDEE). Ala-2 is subject to N-acetylalanine. Residue Ser-41 is modified to Phosphoserine. Residues 166 to 182 (PRPEGRSKGTSDTRDEE) show a composition bias toward basic and acidic residues.

The protein belongs to the UPF0488 family.

This Bos taurus (Bovine) protein is UPF0488 protein C8orf33 homolog.